Reading from the N-terminus, the 661-residue chain is DNA ligase (661 aa).

NAD(+) is bound by residues 31 to 35 (DSGYD), 80 to 81 (SL), and Glu109. Lys111 acts as the N6-AMP-lysine intermediate in catalysis. Residues Arg132, Glu167, Lys283, and Lys307 each contribute to the NAD(+) site. Residues Cys401, Cys404, Cys419, and Cys424 each coordinate Zn(2+). Residues 582-661 (AGEQLLQGKT…AGFLNLLGLS (80 aa)) form the BRCT domain.

This sequence belongs to the NAD-dependent DNA ligase family. LigA subfamily. It depends on Mg(2+) as a cofactor. The cofactor is Mn(2+).

It catalyses the reaction NAD(+) + (deoxyribonucleotide)n-3'-hydroxyl + 5'-phospho-(deoxyribonucleotide)m = (deoxyribonucleotide)n+m + AMP + beta-nicotinamide D-nucleotide.. In terms of biological role, DNA ligase that catalyzes the formation of phosphodiester linkages between 5'-phosphoryl and 3'-hydroxyl groups in double-stranded DNA using NAD as a coenzyme and as the energy source for the reaction. It is essential for DNA replication and repair of damaged DNA. The polypeptide is DNA ligase (Syntrophomonas wolfei subsp. wolfei (strain DSM 2245B / Goettingen)).